The chain runs to 541 residues: Chaperonin GroEL 2 (541 aa).

ATP contacts are provided by residues 29 to 32 (TLGP), 86 to 90 (DGTTT), G413, 476 to 478 (NAA), and D492.

This sequence belongs to the chaperonin (HSP60) family. Forms a cylinder of 14 subunits composed of two heptameric rings stacked back-to-back. Interacts with the co-chaperonin GroES.

The protein resides in the secreted. It localises to the capsule. Its subcellular location is the cell surface. The protein localises to the cell wall. The catalysed reaction is ATP + H2O + a folded polypeptide = ADP + phosphate + an unfolded polypeptide.. Functionally, together with its co-chaperonin GroES, plays an essential role in assisting protein folding. The GroEL-GroES system forms a nano-cage that allows encapsulation of the non-native substrate proteins and provides a physical environment optimized to promote and accelerate protein folding. This chain is Chaperonin GroEL 2, found in Mycobacterium sp. (strain KMS).